The sequence spans 420 residues: Gamma-glutamyl phosphate reductase (420 aa).

It belongs to the gamma-glutamyl phosphate reductase family.

It is found in the cytoplasm. The catalysed reaction is L-glutamate 5-semialdehyde + phosphate + NADP(+) = L-glutamyl 5-phosphate + NADPH + H(+). It functions in the pathway amino-acid biosynthesis; L-proline biosynthesis; L-glutamate 5-semialdehyde from L-glutamate: step 2/2. Catalyzes the NADPH-dependent reduction of L-glutamate 5-phosphate into L-glutamate 5-semialdehyde and phosphate. The product spontaneously undergoes cyclization to form 1-pyrroline-5-carboxylate. The protein is Gamma-glutamyl phosphate reductase of Neisseria meningitidis serogroup C (strain 053442).